The sequence spans 235 residues: DUP240 protein DFP4 (235 aa).

The Cytoplasmic segment spans residues 1-44; it reads MSSELLISNSKPRPEGLRKLCEGETVILPRDITPSKCAYFLKQN. A helical membrane pass occupies residues 45-65; it reads IVFISYIFIHIIITIILNRLA. The Extracellular portion of the chain corresponds to 66–72; the sequence is LSAHGNT. A helical membrane pass occupies residues 73 to 93; sequence LIIILAALLITISLFLLLLLP. At 94-235 the chain is on the cytoplasmic side; that stretch reads YLSCSRYKLR…DKYPEMGVTV (142 aa).

This sequence belongs to the DUP/COS family. In terms of assembly, interacts according to large scale protein interaction studies with BZZ1, SRB4 and SUA7.

The protein localises to the cell membrane. The protein is DUP240 protein DFP4 of Saccharomyces cerevisiae (strain ATCC 204508 / S288c) (Baker's yeast).